A 155-amino-acid polypeptide reads, in one-letter code: Small ribosomal subunit protein uS10m (155 aa).

It belongs to the universal ribosomal protein uS10 family. In terms of assembly, component of the mitochondrial ribosome small subunit (28S) which comprises a 12S rRNA and about 30 distinct proteins.

The protein localises to the mitochondrion. The polypeptide is Small ribosomal subunit protein uS10m (Mrps10) (Rattus norvegicus (Rat)).